The sequence spans 249 residues: Type III pantothenate kinase (249 aa).

Position 8–15 (8–15 (DAGNSRLK)) interacts with ATP. Substrate is bound by residues tyrosine 95 and 102 to 105 (GVDR). Catalysis depends on aspartate 104, which acts as the Proton acceptor. Aspartate 125 lines the K(+) pocket. Threonine 128 lines the ATP pocket. Position 179 (threonine 179) interacts with substrate.

The protein belongs to the type III pantothenate kinase family. In terms of assembly, homodimer. The cofactor is NH4(+). It depends on K(+) as a cofactor.

The protein localises to the cytoplasm. It catalyses the reaction (R)-pantothenate + ATP = (R)-4'-phosphopantothenate + ADP + H(+). Its pathway is cofactor biosynthesis; coenzyme A biosynthesis; CoA from (R)-pantothenate: step 1/5. Functionally, catalyzes the phosphorylation of pantothenate (Pan), the first step in CoA biosynthesis. The chain is Type III pantothenate kinase from Alkalilimnicola ehrlichii (strain ATCC BAA-1101 / DSM 17681 / MLHE-1).